The primary structure comprises 324 residues: Cytochrome c biogenesis protein CcsA (324 aa).

8 helical membrane-spanning segments follow: residues 17–37, 44–64, 68–88, 99–119, 145–165, 230–250, 264–278, and 291–311; these read IISV…IPAL, GMIA…IYSG, LSNL…IHMI, YLSA…TSGL, MLLS…LLVI, VISI…VWAN, TWAF…IYSH, and AIVA…VNLL.

It belongs to the CcmF/CycK/Ccl1/NrfE/CcsA family. May interact with Ccs1.

It is found in the plastid. It localises to the chloroplast thylakoid membrane. Functionally, required during biogenesis of c-type cytochromes (cytochrome c6 and cytochrome f) at the step of heme attachment. This chain is Cytochrome c biogenesis protein CcsA, found in Lemna minor (Common duckweed).